Reading from the N-terminus, the 3038-residue chain is Lovastatin nonaketide synthase, polyketide synthase component (3038 aa).

Residues 8–447 (NEPIVVVGSG…GTNAHAIIEE (440 aa)) form the Ketosynthase family 3 (KS3) domain. Residues cysteine 181, histidine 320, and histidine 367 each act as for beta-ketoacyl synthase activity in the active site. Positions 562–889 (IFTGQGAQWP…GKNDLDSFSR (328 aa)) are malonyl-CoA:ACP transacylase (MAT) domain. Residue serine 656 is the For malonyltransferase activity of the active site. The interval 695–757 (AMLAAGMSFE…DESTFARLLK (63 aa)) is lovC-binding. The tract at residues 953 to 1089 (HLLLGKLSEY…GQLALTIEDV (137 aa)) is N-terminal hotdog fold. Residues 953 to 1263 (HLLLGKLSEY…ENITFKPFSP (311 aa)) form a dehydratase (DH) domain region. Residues 953–1267 (HLLLGKLSEY…FKPFSPPDAS (315 aa)) form the PKS/mFAS DH domain. Histidine 985 functions as the Proton acceptor; for dehydratase activity in the catalytic mechanism. Residues 1107-1267 (EEHPHMNRVN…FKPFSPPDAS (161 aa)) form a C-terminal hotdog fold region. The active-site Proton donor; for dehydratase activity is the aspartate 1174. Residues 1443 to 1543 (LEIGAGTGGA…ARSLLKPGGQ (101 aa)) are methyltransferase (CMet) domain. The tract at residues 2139–2437 (TLPTRVRSID…KIPEYRGAKA (299 aa)) is ketoreductase (KR) domain. Residues 2463–2538 (QIVIDGLSAK…DLANEAAARL (76 aa)) form the Carrier domain. Serine 2498 carries the post-translational modification O-(pantetheine 4'-phosphoryl)serine. Positions 2546–2602 (VAATDGGAESTDNTSENEVSGREDTDLSAAATITEPSSADEDDTEPGDEDVPRSHHP) are disordered. Residues 2583–2594 (SADEDDTEPGDE) are compositionally biased toward acidic residues. An inactive Condensation domain region spans residues 2602-2952 (PLSLGQEYSW…PTSNQPAPLF (351 aa)).

Homodimer. Each MAT domain from the lovB homodimer binds one lovC molecule to form the final active lovB-lovC megasynthase complex. It depends on pantetheine 4'-phosphate as a cofactor.

It catalyses the reaction holo-[lovastatin nonaketide synthase] + 9 malonyl-CoA + S-adenosyl-L-methionine + 11 NADPH + 19 H(+) = dihydromonacolin L-[lovastatin nonaketide synthase] + S-adenosyl-L-homocysteine + 9 CO2 + 11 NADP(+) + 9 CoA + 6 H2O. The protein operates within polyketide biosynthesis; lovastatin biosynthesis. Functionally, lovastatin nonaketide synthase; part of the gene cluster that mediates the biosynthesis of lovastatin (also known as mevinolin, mevacor or monacolin K), a hypolipidemic inhibitor of (3S)-hydroxymethylglutaryl-coenzyme A (HMG-CoA) reductase (HMGR). The first step in the biosynthesis of lovastatin is the production of dihydromonacolin L acid by the lovastatin nonaketide synthase lovB and the trans-acting enoyl reductase lovC (called the lovB-lovC megasynthase complex) via condensation of one acetyl-CoA unit and 8 malonyl-CoA units. The formation of the LovB/C complex is essential for the integrity of the catalytic chamber to the complete total synthesis of DML acid. Dihydromonacolin L acid is released from lovB by the thioesterase lovG. Next, dihydromonacolin L acid is oxidized by the dihydromonacolin L monooxygenase lovA twice to form monacolin J acid. The 2-methylbutyrate moiety of lovastatin is synthesized by the lovastatin diketide synthase lovF via condensation of one acetyl-CoA unit and one malonyl-CoA unit. Finally, the covalent attachment of this moiety to monacolin J acid is catalyzed by the transesterase lovD to yield lovastatin. LovD has broad substrate specificity and can also convert monacolin J to simvastatin using alpha-dimethylbutanoyl-S-methyl-3-mercaptopropionate (DMB-S-MMP) as the thioester acyl donor, and can also catalyze the reverse reaction and function as hydrolase in vitro. LovD has much higher activity with LovF-bound 2-methylbutanoate than with free diketide substrates. The protein is Lovastatin nonaketide synthase, polyketide synthase component of Aspergillus terreus.